The following is a 564-amino-acid chain: Heat shock factor protein 2 (564 aa).

A DNA-binding region spans residues V21–S126. The hydrophobic repeat HR-A/B stretch occupies residues N133–V206. Over residues E271–N280 the composition is skewed to acidic residues. 2 disordered regions span residues E271–S301 and Q320–M347. Residues L390–I415 are hydrophobic repeat HR-C. A compositionally biased stretch (polar residues) spans T448–K465. The interval T448–S468 is disordered.

The protein belongs to the HSF family. Homotrimer. Expressed in most tissues with the exceptions of blood and liver.

It is found in the cytoplasm. It localises to the nucleus. In terms of biological role, DNA-binding protein that specifically binds heat shock promoter elements (HSE) and activates transcription. HSF2 shows constitutive DNA binding activity, even without heat shock. The protein is Heat shock factor protein 2 (HSF2) of Gallus gallus (Chicken).